Consider the following 375-residue polypeptide: Serpin B5 (375 aa).

N-linked (GlcNAc...) asparagine glycosylation is found at asparagine 133, asparagine 298, and asparagine 361.

The protein belongs to the serpin family. Ov-serpin subfamily. As to quaternary structure, interacts with IRF6.

It is found in the secreted. The protein localises to the extracellular space. Tumor suppressor. It blocks the growth, invasion, and metastatic properties of mammary tumors. As it does not undergo the S (stressed) to R (relaxed) conformational transition characteristic of active serpins, it exhibits no serine protease inhibitory activity. This chain is Serpin B5 (Serpinb5), found in Mus musculus (Mouse).